A 913-amino-acid chain; its full sequence is DNA mismatch repair protein MutS (913 aa).

ATP is bound at residue 720–727 (GPNASGKS).

Belongs to the DNA mismatch repair MutS family.

In terms of biological role, this protein is involved in the repair of mismatches in DNA. It is possible that it carries out the mismatch recognition step. This protein has a weak ATPase activity. In Prochlorococcus marinus (strain MIT 9312), this protein is DNA mismatch repair protein MutS.